The sequence spans 330 residues: MDYSHSDSPSTAPAGKTPVDQLRPLLIVGPTGAGKSDLSLEVARRLDQPVEIINGDSMQMYRGMDIGTAKLSRAERAEFPHHLFDCLDVDDTASVAAYRDLAGETVEQIQARGARPIIVGGSMMYLQALVDDWQFPPTDAAVRAKWMAEQDRIGVEALHEVLRSKDPDAADIIEEKDPRRIVRALEVIELTGKPFAASQPPKNVPTRWGTRIFGLKAPGNWLNPRLEARVDRMFAAGLVAEVEGLATAGLSRESTAGKAIGYAQVLSALAGECSMEQAREDTVVGTRRYARRQRSWFRRDPRIHWLDATVADPGLLAGQVIDELRETTQG.

Residues 1–11 (MDYSHSDSPST) are compositionally biased toward polar residues. A disordered region spans residues 1-21 (MDYSHSDSPSTAPAGKTPVDQ). Residue 29–36 (GPTGAGKS) participates in ATP binding. 31–36 (TGAGKS) provides a ligand contact to substrate. Positions 56–59 (DSMQ) are interaction with substrate tRNA.

This sequence belongs to the IPP transferase family. In terms of assembly, monomer. Requires Mg(2+) as cofactor.

It catalyses the reaction adenosine(37) in tRNA + dimethylallyl diphosphate = N(6)-dimethylallyladenosine(37) in tRNA + diphosphate. Catalyzes the transfer of a dimethylallyl group onto the adenine at position 37 in tRNAs that read codons beginning with uridine, leading to the formation of N6-(dimethylallyl)adenosine (i(6)A). In Corynebacterium urealyticum (strain ATCC 43042 / DSM 7109), this protein is tRNA dimethylallyltransferase.